The following is a 301-amino-acid chain: Asialoglycoprotein receptor 2 (301 aa).

The segment at 1–29 is disordered; it reads MEKDFQDIQQLDSEENDHQLIGDEEQGSH. Residues 1–58 are Cytoplasmic-facing; that stretch reads MEKDFQDIQQLDSEENDHQLIGDEEQGSHVQNLRTENPRWGGQPPSRPFPQRLCSKFR. Residue serine 13 is modified to Phosphoserine. The S-palmitoyl cysteine moiety is linked to residue cysteine 54. Residues 59 to 79 form a helical; Signal-anchor for type II membrane protein membrane-spanning segment; the sequence is LSLLALAFNILLLVVICVVSS. At 80 to 301 the chain is on the extracellular side; sequence QSMQLQKEFW…ACERKRDITY (222 aa). Asparagine 97, asparagine 119, and asparagine 165 each carry an N-linked (GlcNAc...) asparagine glycan. Residues 169-295 form the C-type lectin domain; that stretch reads CCPVNWVEFG…QQVNRWACER (127 aa). 3 disulfides stabilise this stretch: cysteine 170/cysteine 181, cysteine 198/cysteine 293, and cysteine 271/cysteine 285.

Interacts with LASS2. As to expression, expressed exclusively in hepatic parenchymal cells.

It localises to the membrane. Functionally, mediates the endocytosis of plasma glycoproteins to which the terminal sialic acid residue on their complex carbohydrate moieties has been removed. The receptor recognizes terminal galactose and N-acetylgalactosamine units. After ligand binding to the receptor, the resulting complex is internalized and transported to a sorting organelle, where receptor and ligand are disassociated. The receptor then returns to the cell membrane surface. In Rattus norvegicus (Rat), this protein is Asialoglycoprotein receptor 2 (Asgr2).